The primary structure comprises 199 residues: HTH-type transcriptional regulator BetI (199 aa).

Residues 8–68 form the HTH tetR-type domain; that stretch reads EIRKPQLVKA…ETMREILRQL (61 aa). The segment at residues 31–50 is a DNA-binding region (H-T-H motif); it reads SISLISKEAGVSTGIINHYF.

The protein operates within amine and polyamine biosynthesis; betaine biosynthesis via choline pathway [regulation]. In terms of biological role, repressor involved in the biosynthesis of the osmoprotectant glycine betaine. It represses transcription of the choline transporter BetT and the genes of BetAB involved in the synthesis of glycine betaine. The chain is HTH-type transcriptional regulator BetI from Vibrio parahaemolyticus serotype O3:K6 (strain RIMD 2210633).